The following is a 119-amino-acid chain: UPF0102 protein FP2501 (119 aa).

Belongs to the UPF0102 family.

The protein is UPF0102 protein FP2501 of Flavobacterium psychrophilum (strain ATCC 49511 / DSM 21280 / CIP 103535 / JIP02/86).